Reading from the N-terminus, the 196-residue chain is Large ribosomal subunit protein uL5 (196 aa).

This sequence belongs to the universal ribosomal protein uL5 family. As to quaternary structure, part of the 50S ribosomal subunit; part of the 5S rRNA/L5/L18/L25 subcomplex. Contacts the 5S rRNA and the P site tRNA. Forms a bridge to the 30S subunit in the 70S ribosome.

Functionally, this is one of the proteins that bind and probably mediate the attachment of the 5S RNA into the large ribosomal subunit, where it forms part of the central protuberance. In the 70S ribosome it contacts protein S13 of the 30S subunit (bridge B1b), connecting the 2 subunits; this bridge is implicated in subunit movement. Contacts the P site tRNA; the 5S rRNA and some of its associated proteins might help stabilize positioning of ribosome-bound tRNAs. In Rhodopirellula baltica (strain DSM 10527 / NCIMB 13988 / SH1), this protein is Large ribosomal subunit protein uL5.